The chain runs to 648 residues: SRSF protein kinase 1 (648 aa).

The interval 1 to 57 is disordered; it reads MERKVLALQARKKRTKAKKDKAQRKPETQHRGSAPHSESDIPEQEEEILGSDDDEQE. The segment covering 10 to 22 has biased composition (basic residues); the sequence is ARKKRTKAKKDKA. A compositionally biased stretch (acidic residues) spans 40–57; sequence DIPEQEEEILGSDDDEQE. S51 carries the phosphoserine modification. The Protein kinase domain maps to 80-646; sequence YHVIRKLGWG…AAECLRHPWL (567 aa). ATP is bound by residues 86–94 and K109; that span reads LGWGHFSTV. D213 functions as the Proton acceptor in the catalytic mechanism. 2 disordered regions span residues 238–354 and 395–464; these read WQRS…APEI and PSFL…DSKG. Basic residues predominate over residues 265-276; it reads KNKKKKLKKKQK. Composition is skewed to basic and acidic residues over residues 277 to 288 and 304 to 317; these read RQAELLEKRMQE and NKQE…DRPL. Residues S309, S311, and S333 each carry the phosphoserine modification. 2 stretches are compositionally biased toward polar residues: residues 333–343 and 396–441; these read SNSIGQDQTLT and SFLN…TQLE. T448 carries the post-translational modification Phosphothreonine. At S450 the chain carries Phosphoserine. Position 548 is a phosphoserine; by CK2 (S548).

The protein belongs to the protein kinase superfamily. CMGC Ser/Thr protein kinase family. As to quaternary structure, monomer. Found in a multisubunit complex containing seven proteins, named toposome, which separates entangled circular chromatin DNA during chromosome segregation. Interacts with HHV-1 ICP27 protein. Interacts with DNAJC8 and AHSA1/AHA1 and this mediates formation of a complex with the Hsp70 /Hsp90 machinery. Binds to IGF2BP1, SYNCRIP, HNRNPA2B1 and HNRNPC. Interacts with SAFB/SAFB1 and SAFB2 which inhibits its activity. Mg(2+) is required as a cofactor. In terms of tissue distribution, predominantly expressed in the testis but is also present at lower levels in heart, spleen, liver, brain, kidney, lung and skeletal muscle. Present in all germinal cells in the seminiferous tubules but not in mature spermatozoa.

The protein resides in the cytoplasm. It is found in the nucleus. The protein localises to the nucleoplasm. It localises to the nucleus matrix. Its subcellular location is the microsome. The protein resides in the nucleus speckle. It is found in the chromosome. It carries out the reaction L-seryl-[protein] + ATP = O-phospho-L-seryl-[protein] + ADP + H(+). The catalysed reaction is L-threonyl-[protein] + ATP = O-phospho-L-threonyl-[protein] + ADP + H(+). Activated by phosphorylation on Ser-51 and Ser-548. In terms of biological role, serine/arginine-rich protein-specific kinase which specifically phosphorylates its substrates at serine residues located in regions rich in arginine/serine dipeptides, known as RS domains and is involved in the phosphorylation of SR splicing factors and the regulation of splicing. Plays a central role in the regulatory network for splicing, controlling the intranuclear distribution of splicing factors in interphase cells and the reorganization of nuclear speckles during mitosis. Can influence additional steps of mRNA maturation, as well as other cellular activities, such as chromatin reorganization in somatic and sperm cells and cell cycle progression. Phosphorylates SFRS2, ZRSR2, LBR and PRM1. Phosphorylates SRSF1 using a directional (C-terminal to N-terminal) and a dual-track mechanism incorporating both processive phosphorylation (in which the kinase stays attached to the substrate after each round of phosphorylation) and distributive phosphorylation steps (in which the kinase and substrate dissociate after each phosphorylation event). The RS domain of SRSF1 binds first to a docking groove in the large lobe of the kinase domain of SRPK1. This induces certain structural changes in SRPK1 and/or RRM2 domain of SRSF1, allowing RRM2 to bind the kinase and initiate phosphorylation. The cycles continue for several phosphorylation steps in a processive manner (steps 1-8) until the last few phosphorylation steps (approximately steps 9-12). During that time, a mechanical stress induces the unfolding of the beta-4 motif in RRM2, which then docks at the docking groove of SRPK1. This also signals RRM2 to begin to dissociate, which facilitates SRSF1 dissociation after phosphorylation is completed. Can mediate hepatitis B virus (HBV) core protein phosphorylation. It plays a negative role in the regulation of HBV replication through a mechanism not involving the phosphorylation of the core protein but by reducing the packaging efficiency of the pregenomic RNA (pgRNA) without affecting the formation of the viral core particles. Can induce splicing of exon 10 in MAPT/TAU. This chain is SRSF protein kinase 1, found in Mus musculus (Mouse).